We begin with the raw amino-acid sequence, 398 residues long: Na(+)/H(+) antiporter NhaA (398 aa).

A run of 12 helical transmembrane segments spans residues 8–28 (FLQL…LALI), 59–79 (LLLW…GMEI), 96–116 (LPVI…SFII), 124–144 (AGWA…LSLL), 154–174 (VFLL…IALF), 177–197 (AELH…LLML), 202–222 (VMLL…VLKS), 223–243 (GVHA…IRGA), 261–281 (YFIL…GLSW), 292–312 (IIVG…WLAV), 328–348 (LFGL…IGGL), and 362–382 (LGIL…LRNA).

The protein belongs to the NhaA Na(+)/H(+) (TC 2.A.33) antiporter family.

The protein localises to the cell inner membrane. The enzyme catalyses Na(+)(in) + 2 H(+)(out) = Na(+)(out) + 2 H(+)(in). Its function is as follows. Na(+)/H(+) antiporter that extrudes sodium in exchange for external protons. This is Na(+)/H(+) antiporter NhaA from Tolumonas auensis (strain DSM 9187 / NBRC 110442 / TA 4).